Reading from the N-terminus, the 436-residue chain is Voltage-gated purine nucleotide uniporter SLC17A9 (436 aa).

Helical transmembrane passes span Ile64 to Gly84, Val92 to His112, Leu118 to Ala138, Ile158 to Leu178, Tyr181 to Val201, Pro239 to Leu259, Trp276 to Leu296, Gly316 to Cys336, Gly369 to Leu389, and Cys402 to Gly422.

It belongs to the major facilitator superfamily. Sodium/anion cotransporter family. In terms of tissue distribution, widely expressed, but more predominantly in adrenal gland, brain and thyroid.

The protein localises to the cytoplasmic vesicle. It is found in the secretory vesicle. The protein resides in the chromaffin granule membrane. It localises to the secretory vesicle membrane. Its subcellular location is the lysosome membrane. It carries out the reaction ATP(in) = ATP(out). It catalyses the reaction ADP(in) = ADP(out). The catalysed reaction is GTP(in) = GTP(out). With respect to regulation, activity is chloride-dependent. Inhibited by AMP-PNP, gammaS-ATP, diadenosine triphosphate, 4,4'- diisothiocyanatostilbene-2,2'-disulfonate (DIDS) and Evans blue. Voltage-gated ATP nucleotide uniporter that can also transport the purine nucleotides ADP and GTP. Uses the membrane potential as the driving force to control ATP accumulation in lysosomes and secretory vesicles. By controlling ATP storage in lysosomes, regulates ATP-dependent proteins of these organelles. Also indirectly regulates the exocytosis of ATP through its import into lysosomes in astrocytes and secretory vesicles such as adrenal chromaffin granules, mucin granules and synaptic vesicles. The chain is Voltage-gated purine nucleotide uniporter SLC17A9 from Homo sapiens (Human).